A 154-amino-acid chain; its full sequence is Protein X (154 aa).

The tract at residues 26–45 is disordered; that stretch reads RGRPVSGPLGSLSSSSPSAV. Over residues 31-43 the composition is skewed to low complexity; that stretch reads SGPLGSLSSSSPS. Residues 68–117 are mitochondrial targeting sequence; that stretch reads PCALRFTSARRMETTVNAHQILPKILHKRTLGLSTMSTTDLEAYFKDCLF.

It belongs to the orthohepadnavirus protein X family. As to quaternary structure, may form homodimer. May interact with host CEBPA, CFLAR, CREB1, DDB1, E4F1, HBXIP, HSPD1/HSP60, NFKBIA, POLR2E and SMAD4. Interacts with host SMC5-SMC6 complex and induces its degradation. Interacts with host TRPC4AP; leading to prevent ubiquitination of TRPC4AP. Interacts with host PLSCR1; this interaction promotes ubiquitination and degradation of HBx and impairs HBx-mediated cell proliferation. In terms of processing, a fraction may be phosphorylated in insect cells and HepG2 cells, a human hepatoblastoma cell line. Phosphorylated in vitro by host protein kinase C or mitogen-activated protein kinase. N-acetylated in insect cells.

The protein resides in the host cytoplasm. The protein localises to the host nucleus. It is found in the host mitochondrion. In terms of biological role, multifunctional protein that plays a role in silencing host antiviral defenses and promoting viral transcription. Does not seem to be essential for HBV infection. May be directly involved in development of cirrhosis and liver cancer (hepatocellular carcinoma). Most of cytosolic activities involve modulation of cytosolic calcium. The effect on apoptosis is controversial depending on the cell types in which the studies have been conducted. May induce apoptosis by localizing in mitochondria and causing loss of mitochondrial membrane potential. May also modulate apoptosis by binding host CFLAR, a key regulator of the death-inducing signaling complex (DISC). Promotes viral transcription by using the host E3 ubiquitin ligase DDB1 to target the SMC5-SMC6 complex to proteasomal degradation. This host complex would otherwise bind to viral episomal DNA, and prevents its transcription. Moderately stimulates transcription of many different viral and cellular transcription elements. Promoters and enhancers stimulated by HBx contain DNA binding sites for NF-kappa-B, AP-1, AP-2, c-EBP, ATF/CREB, or the calcium-activated factor NF-AT. This is Protein X from Hepatitis B virus genotype D subtype ayw (isolate Japan/JYW796/1988) (HBV-D).